Reading from the N-terminus, the 220-residue chain is Coat protein TP4 (220 aa).

It localises to the virion. The protein is Coat protein TP4 of Thermoproteus tenax (TTV1).